We begin with the raw amino-acid sequence, 526 residues long: 3',5'-cyclic-nucleotide phosphodiesterase 2 (526 aa).

Positions arginine 182–glutamine 526 constitute a PDEase domain. Residue histidine 265 is the Proton donor of the active site. A divalent metal cation is bound by residues histidine 269, histidine 302, aspartate 303, and aspartate 400.

This sequence belongs to the cyclic nucleotide phosphodiesterase family. As to quaternary structure, monomer. A divalent metal cation is required as a cofactor.

The enzyme catalyses 3',5'-cyclic AMP + H2O = AMP + H(+). Controls the level of cAMP in yeast cells, together with the low-affinity cAMP phosphodiesterase (PDE1). The chain is 3',5'-cyclic-nucleotide phosphodiesterase 2 from Saccharomyces cerevisiae (strain ATCC 204508 / S288c) (Baker's yeast).